A 673-amino-acid chain; its full sequence is MLVLLCCVVLHVGVARICCSHEPKWQLVWSDEFTNGISSDWEFEMGNGLNGWGNNELQYYRRENAQVEGGKLVITAKREDYDGFKYTSARLKTQFDKSWKYGKIEAKMAIPSFRGVWVMFWMSGDNTNYVRWPSSGEIDFIEHRNTNNEKVRGTIHWSTPDGAHAHHNRESNTNGIDYHIYSVEWNSSIVKWFVNGNQYFEVKIQGGVNGKSAFRNKVFVILNMAIGGNWPGFDVADEAFPAKMYIDYVRVYQDASTSSPVGDTSLDGYYFVQNRHSELYLDVTDASNEDGAFLQQWSYSGNENQQFDFEHLENNVYKITNKKSGKSLDVYNFGTENGVRIQQWSYGGARNQQFTVQSVGDGYYKIIPRGSGKLVEVADFSKDAGGKIQQWSDNNQLSGQWKLIKSKSYSKLIQAESYFDSSKVQLEDTSDVGGGKNVKCDNEGAWMAYKDIDFPSSGNYRIEYRVASERAGGKLSLDLNAGSIVLGMLDVPSTGGWQKWTTISHTVNVDSGTYNLGIYVQRASWNINWIKITKIPEQSNLNQGRRNSKLIQAESYFSYSEVQLEDTLDVGGGKNVKCDKEGAWMAYKDIDFPSSGSYRVEYRVASERAGGKLSLDLNAGSIVLGMLDIPSTGGLQKWTTISHIVNVDLGTYNLGIYVQKASWNINWIRITKV.

An N-terminal signal peptide occupies residues M1 to C19. Residues L27–T257 form the GH16 domain. E137 serves as the catalytic Nucleophile. E142 functions as the Proton donor in the catalytic mechanism. N186 is a glycosylation site (N-linked (GlcNAc...) asparagine). Residues L266–I404 enclose the Ricin B-type lectin domain. 2 CBM6 domains span residues K411 to T533 and K549 to T671.

It belongs to the glycosyl hydrolase 16 family. In terms of assembly, clotting factor G is a heterodimer composed of two non-covalently associated subunits, alpha and beta. In terms of processing, in presence of (1-&gt;3)-beta-glucan, proteolytically cleaved into a 55kDa and a 17kDa forms. In terms of tissue distribution, expressed in hemocytes (at protein level).

Functionally, component of the heterodimer clotting factor G which may play a role in defense mechanisms against fungi. Initiates a (1-&gt;3)-beta-glucan-sensing clotting pathway whereby the alpha subunit binds to glucans containing (1-&gt;3)-beta linkages, which are components of the fungal cell wall, and the beta subunit catalyzes the activation of proclotting enzyme. This chain is Clotting factor G alpha subunit, found in Tachypleus tridentatus (Japanese horseshoe crab).